A 640-amino-acid polypeptide reads, in one-letter code: Auxin efflux carrier component 3 (640 aa).

The Extracellular portion of the chain corresponds to 1–7 (MISWHDL). A helical transmembrane segment spans residues 8–28 (YTVLTAVIPLYVAMILAYGSV). At 29 to 38 (RWWKIFSPDQ) the chain is on the cytoplasmic side. A helical transmembrane segment spans residues 39–59 (CSGINRFVAIFAVPLLSFHFI). Residue valine 51 coordinates (indol-3-yl)acetate. The Extracellular portion of the chain corresponds to 60–71 (STNNPYAMNLRF). A helical transmembrane segment spans residues 72 to 92 (IAADTLQKIIMLSLLVLWANF). Topologically, residues 93–101 (TRSGSLEWS) are cytoplasmic. The chain crosses the membrane as a helical span at residues 102–122 (ITIFSLSTLPNTLVMGIPLLI). (indol-3-yl)acetate contacts are provided by asparagine 112 and leucine 114. Topologically, residues 123–131 (AMYGEYSGS) are extracellular. The chain crosses the membrane as a helical span at residues 132–152 (LMVQIVVLQCIIWYTLLLFLF). Residue tyrosine 145 coordinates (indol-3-yl)acetate. Residues 153 to 500 (EFRGAKMLIM…LIRNPNTYSS (348 aa)) are Cytoplasmic-facing. Serine 226, serine 243, and serine 283 each carry phosphoserine. The disordered stretch occupies residues 310–351 (APNPEFSSTTTSTANKSVNKNPKDVNTNQQTTLPTGGKSNSH). The segment covering 314–348 (EFSSTTTSTANKSVNKNPKDVNTNQQTTLPTGGKS) has biased composition (polar residues). Threonine 322 is modified (phosphothreonine). Serine 366 bears the Phosphoserine mark. Disordered stretches follow at residues 372 to 391 (AGLNVFGGAPDNDQGGRSDQ) and 404 to 471 (SHNG…SQRK). A compositionally biased stretch (basic and acidic residues) spans 430–442 (GKEEEAERPKDAE). Over residues 449-460 (APNSTAALQSKT) the composition is skewed to polar residues. The chain crosses the membrane as a helical span at residues 501–521 (LIGLIWALVAFRWHVAMPKII). The Extracellular portion of the chain corresponds to 522 to 524 (QQS). The helical transmembrane segment at 525-545 (ISILSDAGLGMAMFSLGLFMA) threads the bilayer. At 546 to 559 (LQPKLIACGNSVAT) the chain is on the cytoplasmic side. Residues 560–580 (FAMAVRFLTGPAVMAVAAIAI) traverse the membrane as a helical segment. The Extracellular portion of the chain corresponds to 581–585 (GLRGD). The helical transmembrane segment at 586 to 606 (LLRVAIVQAALPQGIVPFVFA) threads the bilayer. (indol-3-yl)acetate is bound by residues isoleucine 600 and valine 601. The Cytoplasmic portion of the chain corresponds to 607–619 (KEYNVHPAILSTG). A helical transmembrane segment spans residues 620 to 640 (VIFGMLIALPITLVYYILLGL).

Belongs to the auxin efflux carrier (TC 2.A.69.1) family. Homodimer. Predominantly expressed at the lateral side of shoot endodermis cells as well as root pericycle and columella cells.

The protein resides in the cell membrane. With respect to regulation, auxin efflux carrier activity is competitively inhibited by naptalamate (N-1-naphthylphthalamic acid, NPA). Its function is as follows. Acts as a component of the auxin efflux carrier; this activity is enhanced when activated by PID-mediated phosphorylation. Seems to be involved in the lateral auxin transport system. Together with PIN4 and PIN7, involved in the connective auxin transport (CAT) that ensures communication across the shoot system, and modulates strigolactone-mediated shoot branching control. Binds auxins including indole-3-acetic acid (IAA). Coordinated polar localization of PIN3 is directly regulated by the vesicle trafficking process. The sequence is that of Auxin efflux carrier component 3 from Arabidopsis thaliana (Mouse-ear cress).